Here is a 228-residue protein sequence, read N- to C-terminus: Cytidylate kinase (228 aa).

17 to 25 (GPTASGKGT) is a binding site for ATP.

This sequence belongs to the cytidylate kinase family. Type 1 subfamily.

It localises to the cytoplasm. It carries out the reaction CMP + ATP = CDP + ADP. The enzyme catalyses dCMP + ATP = dCDP + ADP. In Burkholderia multivorans (strain ATCC 17616 / 249), this protein is Cytidylate kinase.